The following is a 295-amino-acid chain: Pyridoxal 5'-phosphate synthase subunit PdxS (295 aa).

Position 25 (Asp-25) interacts with D-ribose 5-phosphate. Lys-82 acts as the Schiff-base intermediate with D-ribose 5-phosphate in catalysis. A D-ribose 5-phosphate-binding site is contributed by Gly-154. Arg-166 is a D-glyceraldehyde 3-phosphate binding site. D-ribose 5-phosphate-binding positions include Gly-215 and 236 to 237 (GS).

The protein belongs to the PdxS/SNZ family. As to quaternary structure, in the presence of PdxT, forms a dodecamer of heterodimers.

It catalyses the reaction aldehydo-D-ribose 5-phosphate + D-glyceraldehyde 3-phosphate + L-glutamine = pyridoxal 5'-phosphate + L-glutamate + phosphate + 3 H2O + H(+). Its pathway is cofactor biosynthesis; pyridoxal 5'-phosphate biosynthesis. In terms of biological role, catalyzes the formation of pyridoxal 5'-phosphate from ribose 5-phosphate (RBP), glyceraldehyde 3-phosphate (G3P) and ammonia. The ammonia is provided by the PdxT subunit. Can also use ribulose 5-phosphate and dihydroxyacetone phosphate as substrates, resulting from enzyme-catalyzed isomerization of RBP and G3P, respectively. The protein is Pyridoxal 5'-phosphate synthase subunit PdxS of Pasteurella multocida (strain Pm70).